Here is a 215-residue protein sequence, read N- to C-terminus: Cytochrome b6 (215 aa).

A helical transmembrane segment spans residues 32–52 (IFYCLGGITLTCFLVQVATGF). Cys35 contacts heme c. Residues His86 and His100 each contribute to the heme b site. 3 consecutive transmembrane segments (helical) span residues 90–110 (ASMMVLMMILHVFRVYLTGGF), 116–136 (LTWVTGVILAVLTVSFGVTGY), and 186–206 (LHTFILPLLTAVFMPMHFLMI). The heme b site is built by His187 and His202.

It belongs to the cytochrome b family. PetB subfamily. As to quaternary structure, the 4 large subunits of the cytochrome b6-f complex are cytochrome b6, subunit IV (17 kDa polypeptide, PetD), cytochrome f and the Rieske protein, while the 4 small subunits are PetG, PetL, PetM and PetN. The complex functions as a dimer. Heme b is required as a cofactor. Heme c serves as cofactor.

The protein resides in the plastid. Its subcellular location is the chloroplast thylakoid membrane. In terms of biological role, component of the cytochrome b6-f complex, which mediates electron transfer between photosystem II (PSII) and photosystem I (PSI), cyclic electron flow around PSI, and state transitions. The sequence is that of Cytochrome b6 from Pinus koraiensis (Korean pine).